Consider the following 210-residue polypeptide: Probable nicotinate-nucleotide adenylyltransferase (210 aa).

This sequence belongs to the NadD family.

The catalysed reaction is nicotinate beta-D-ribonucleotide + ATP + H(+) = deamido-NAD(+) + diphosphate. It functions in the pathway cofactor biosynthesis; NAD(+) biosynthesis; deamido-NAD(+) from nicotinate D-ribonucleotide: step 1/1. In terms of biological role, catalyzes the reversible adenylation of nicotinate mononucleotide (NaMN) to nicotinic acid adenine dinucleotide (NaAD). The polypeptide is Probable nicotinate-nucleotide adenylyltransferase (Streptococcus pyogenes serotype M1).